The sequence spans 96 residues: Putative regulatory protein Teth514_1762 (96 aa).

It belongs to the RemA family.

In Thermoanaerobacter sp. (strain X514), this protein is Putative regulatory protein Teth514_1762.